Reading from the N-terminus, the 552-residue chain is Steroid transmembrane transporter SLC22A24 (552 aa).

The next 12 membrane-spanning stretches (helical) occupy residues 16–36 (FQILQTAFFCICILIAYPHML), 144–164 (LISVAQSLFMVAQLLGGLIFG), 178–198 (CCLLLFAISGTCAAIAPTFPV), 204–224 (FLGGICLMNIITNAVSTMSEW), 235–255 (GIILNSCNIGQILMGGLGFVI), 267–287 (IPLFILFLFSRSVLESAQWLI), 350–370 (IFYLSFVRFAATIPFLGLMLN), 378–398 (IFLFQIIFGAVTFIVRCAVLL), 407–427 (ISQMVSSFLVGIPILVNIFLS), 435–455 (VALATLGIGATTAIFTTHTVH), 469–489 (IGLNAMFSRLGATLAPLLMIL), and 496–516 (LPWIIYGVSSILAGLVVLLLP). The segment at 524-552 (PNTIQDVENNRRDSRKTKQEDISMKVTQF) is disordered. The span at 531 to 546 (ENNRRDSRKTKQEDIS) shows a compositional bias: basic and acidic residues.

Belongs to the major facilitator (TC 2.A.1) superfamily. Organic cation transporter (TC 2.A.1.19) family.

Its subcellular location is the cell membrane. The enzyme catalyses estrone 3-sulfate(out) + glutarate(in) = estrone 3-sulfate(in) + glutarate(out). It carries out the reaction 17beta-estradiol 17-O-(beta-D-glucuronate)(out) + glutarate(in) = 17beta-estradiol 17-O-(beta-D-glucuronate)(in) + glutarate(out). It catalyses the reaction taurocholate(out) + glutarate(in) = taurocholate(in) + glutarate(out). The catalysed reaction is glycocholate(out) + glutarate(in) = glycocholate(in) + glutarate(out). The enzyme catalyses dehydroepiandrosterone 3-sulfate(out) + glutarate(in) = dehydroepiandrosterone 3-sulfate(in) + glutarate(out). It carries out the reaction glutarate(in) + succinate(out) = glutarate(out) + succinate(in). Renal transmembrane organic anion/dicarboxylate exchanger that participates in the reabsorption of conjugated steroids, as well as bile acids, driven by an outward gradient of dicarboxylates such as glutarate or succinate. Transports taurocholate, estrone 3-sulfate, and estradiol-17-glucuronide (17beta-estradiol 17-O-(beta-D-glucuronate)), but not androstanediol glucuronide (5alpha-androstane-3alpha,17beta-diol 3-O-(beta-D-glucuronate)). This is Steroid transmembrane transporter SLC22A24 from Equus caballus (Horse).